The following is a 371-amino-acid chain: Queuine tRNA-ribosyltransferase (371 aa).

The Proton acceptor role is filled by Asp-89. Residues 89 to 93 (DSGGF), Asp-143, Gln-185, and Gly-212 contribute to the substrate site. The segment at 243–249 (GVGKPED) is RNA binding. The Nucleophile role is filled by Asp-262. The interval 267 to 271 (TRNAR) is RNA binding; important for wobble base 34 recognition. Zn(2+) contacts are provided by Cys-300, Cys-302, Cys-305, and His-331.

The protein belongs to the queuine tRNA-ribosyltransferase family. As to quaternary structure, homodimer. Within each dimer, one monomer is responsible for RNA recognition and catalysis, while the other monomer binds to the replacement base PreQ1. Zn(2+) serves as cofactor.

The catalysed reaction is 7-aminomethyl-7-carbaguanine + guanosine(34) in tRNA = 7-aminomethyl-7-carbaguanosine(34) in tRNA + guanine. It participates in tRNA modification; tRNA-queuosine biosynthesis. Catalyzes the base-exchange of a guanine (G) residue with the queuine precursor 7-aminomethyl-7-deazaguanine (PreQ1) at position 34 (anticodon wobble position) in tRNAs with GU(N) anticodons (tRNA-Asp, -Asn, -His and -Tyr). Catalysis occurs through a double-displacement mechanism. The nucleophile active site attacks the C1' of nucleotide 34 to detach the guanine base from the RNA, forming a covalent enzyme-RNA intermediate. The proton acceptor active site deprotonates the incoming PreQ1, allowing a nucleophilic attack on the C1' of the ribose to form the product. After dissociation, two additional enzymatic reactions on the tRNA convert PreQ1 to queuine (Q), resulting in the hypermodified nucleoside queuosine (7-(((4,5-cis-dihydroxy-2-cyclopenten-1-yl)amino)methyl)-7-deazaguanosine). This is Queuine tRNA-ribosyltransferase from Pseudomonas syringae pv. tomato (strain ATCC BAA-871 / DC3000).